The chain runs to 420 residues: Diaminopimelate decarboxylase (420 aa).

An N6-(pyridoxal phosphate)lysine modification is found at Lys-54. His-191 contributes to the substrate binding site. Pyridoxal 5'-phosphate-binding positions include Gly-227 and 268 to 271 (EPGR). Arg-271, Arg-307, and Tyr-311 together coordinate substrate. The active-site Proton donor is Cys-342. Positions 343 and 378 each coordinate substrate. Position 378 (Tyr-378) interacts with pyridoxal 5'-phosphate.

The protein belongs to the Orn/Lys/Arg decarboxylase class-II family. LysA subfamily. Pyridoxal 5'-phosphate serves as cofactor.

The catalysed reaction is meso-2,6-diaminopimelate + H(+) = L-lysine + CO2. It participates in amino-acid biosynthesis; L-lysine biosynthesis via DAP pathway; L-lysine from DL-2,6-diaminopimelate: step 1/1. Is activated by 2,3-dimercaptopropan-1-ol. Its function is as follows. Specifically catalyzes the decarboxylation of meso-diaminopimelate (meso-DAP) to L-lysine. Is not active against the DD- or LL-isomers of diaminopimelate. This chain is Diaminopimelate decarboxylase, found in Escherichia coli (strain K12).